We begin with the raw amino-acid sequence, 837 residues long: V-type proton ATPase 116 kDa subunit a 1 (837 aa).

At 1-388 the chain is on the cytoplasmic side; that stretch reads MGELFRSEEM…DAYGIGTYRE (388 aa). 2 positions are modified to phosphothreonine: Thr250 and Thr360. The residue at position 364 (Tyr364) is a Phosphotyrosine. The helical transmembrane segment at 389–407 threads the bilayer; that stretch reads INPAPYTIITFPFLFAVMF. Residues 408–409 are Vacuolar-facing; it reads GD. A helical transmembrane segment spans residues 410-426; the sequence is FGHGILMTLFAVWMVLR. Residues 427–441 are Cytoplasmic-facing; that stretch reads ESRILSQKNENEMFS. The chain crosses the membrane as a helical span at residues 442-471; that stretch reads TVFSGRYIILLMGVFSMYTGLIYNDCFSKS. Over 472–534 the chain is Vacuolar; the sequence is LNIFGSSWSV…ATNKLTFLNS (63 aa). A glycan (N-linked (GalNAc...) asparagine) is linked at Asn488. The helical transmembrane segment at 535–554 threads the bilayer; the sequence is FKMKMSVILGIIHMLFGVSL. The Cytoplasmic segment spans residues 555–572; the sequence is SLFNHIYFKKPLNIYFGF. Residues 573–593 form a helical membrane-spanning segment; sequence IPEIIFMTSLFGYLVILIFYK. The Vacuolar segment spans residues 594-638; the sequence is WTAYDAHTSENAPSLLIHFINMFLFSYPESGYSMLYSGQKGIQCF. Residues 639–658 form a helical membrane-spanning segment; that stretch reads LVVVALLCVPWMLLFKPLVL. At 659 to 724 the chain is on the cytoplasmic side; the sequence is RRQYLRRKHL…DTMVHQAIHT (66 aa). The chain crosses the membrane as a helical span at residues 725–749; that stretch reads IEYCLGCISNTASYLRLWALSLAHA. At 750-770 the chain is on the vacuolar side; it reads QLSEVLWTMVIHIGLSVKSLA. Residues 771 to 809 traverse the membrane as a helical segment; that stretch reads GGLVLFFFFTAFATLTVAILLIMEGLSAFLHALRLHWVE. At 810–837 the chain is on the cytoplasmic side; the sequence is FQNKFYSGTGFKFLPFSFEHIREGKFEE.

This sequence belongs to the V-ATPase 116 kDa subunit family. V-ATPase is a heteromultimeric enzyme made up of two complexes: the ATP-hydrolytic V1 complex and the proton translocation V0 complex. The V1 complex consists of three catalytic AB heterodimers that form a heterohexamer, three peripheral stalks each consisting of EG heterodimers, one central rotor including subunits D and F, and the regulatory subunits C and H. The proton translocation complex V0 consists of the proton transport subunit a, a ring of proteolipid subunits c9c'', rotary subunit d, subunits e and f, and the accessory subunits ATP6AP1/Ac45 and ATP6AP2/PRR. Interacts with SPAAR.

It localises to the cytoplasmic vesicle. It is found in the clathrin-coated vesicle membrane. The protein resides in the secretory vesicle. The protein localises to the synaptic vesicle membrane. Its subcellular location is the melanosome. Its function is as follows. Subunit of the V0 complex of vacuolar(H+)-ATPase (V-ATPase), a multisubunit enzyme composed of a peripheral complex (V1) that hydrolyzes ATP and a membrane integral complex (V0) that transports protons across cellular membranes. V-ATPase is responsible for the acidification of various organelles, such as lysosomes, endosomes, the trans-Golgi network, and secretory granules, including synaptic vesicles. In certain cell types, can be exported to the plasma membrane, where it is involved in the acidification of the extracellular environment. Required for assembly and activity of the vacuolar ATPase. Through its action on compartment acidification, plays an essential role in neuronal development in terms of integrity and connectivity of neurons. The protein is V-type proton ATPase 116 kDa subunit a 1 (ATP6V0A1) of Homo sapiens (Human).